The following is a 906-amino-acid chain: Protein transport protein SEC24-2 (906 aa).

Positions 222, 225, 244, and 247 each coordinate Zn(2+). A zinc finger-like region spans residues 222 to 247; it reads CRRCRSYMNPFVTFIEQGRRWRCNFC.

It belongs to the SEC23/SEC24 family. SEC24 subfamily. In terms of assembly, the COPII coat is composed of at least 5 proteins: the SEC23/24 complex, the SEC13/31 complex, and the protein SAR1. Golgi apparatus membrane; Peripheral membrane protein; Cytoplasmic side.

It is found in the cytoplasm. Its subcellular location is the cytoplasmic vesicle. It localises to the COPII-coated vesicle membrane. The protein resides in the endoplasmic reticulum membrane. The protein localises to the golgi apparatus membrane. Functionally, component of the coat protein complex II (COPII) which promotes the formation of transport vesicles from the endoplasmic reticulum (ER). The coat has two main functions, the physical deformation of the endoplasmic reticulum membrane into vesicles and the selection of cargo molecules. The protein is Protein transport protein SEC24-2 (SEC242) of Candida glabrata (strain ATCC 2001 / BCRC 20586 / JCM 3761 / NBRC 0622 / NRRL Y-65 / CBS 138) (Yeast).